Here is a 950-residue protein sequence, read N- to C-terminus: Protocadherin alpha-3 (950 aa).

Positions 1-29 (MLFSWREDPGAQCLLLSLLLLAASEVGSG) are cleaved as a signal peptide. Cadherin domains are found at residues 30-133 (QLHY…APVF), 134-242 (PMAV…APAF), 243-350 (ERTI…VPEL), 351-455 (VIQS…APAF), 456-565 (SQSE…APAL), and 581-678 (VPRS…APKA). The Extracellular segment spans residues 30-697 (QLHYSVSEEA…GPEAALVDVN (668 aa)). Asn257 and Asn265 each carry an N-linked (GlcNAc...) asparagine glycan. A glycan (N-linked (GlcNAc...) asparagine) is linked at Asn548. The helical transmembrane segment at 698–718 (VYLIVAICAVSSLLVLTLLLY) threads the bilayer. The Cytoplasmic segment spans residues 719-950 (TALRCSAPPT…GNSTTDNSDQ (232 aa)). PXXP repeat units follow at residues 734 to 737 (PGKP) and 774 to 777 (PSLP). The 6 X 4 AA repeats of P-X-X-P stretch occupies residues 734–894 (PGKPTLVCSS…PDKFIIPGSP (161 aa)). 3 disordered regions span residues 777–806 (PPCP…NPDW), 831–856 (GPGG…EVSP), and 869–950 (FKYG…NSDQ). Residues 782–797 (SRDREEKQDVDVDLSA) show a composition bias toward basic and acidic residues. PXXP repeat units follow at residues 799-802 (PRQP), 832-835 (PGGP), 873-876 (PGNP), and 891-894 (PGSP). Residues 909–923 (DKSDFITFGKKEETK) show a composition bias toward basic and acidic residues.

It is found in the cell membrane. Functionally, potential calcium-dependent cell-adhesion protein. May be involved in the establishment and maintenance of specific neuronal connections in the brain. The chain is Protocadherin alpha-3 (PCDHA3) from Homo sapiens (Human).